Consider the following 498-residue polypeptide: Signal recognition particle receptor FtsY (498 aa).

Disordered stretches follow at residues 1–130 (MGLF…PNQS) and 147–200 (KVES…YNRS). Low complexity predominate over residues 36-46 (ALLAETAETAE). Positions 103 to 120 (SENSVAAVQNNTETMPSQ) are enriched in polar residues. Residues 301–308 (GVNGVGKT), 383–387 (DTAGR), and 447–450 (TKID) each bind GTP.

Belongs to the GTP-binding SRP family. FtsY subfamily. Part of the signal recognition particle protein translocation system, which is composed of SRP and FtsY.

The protein resides in the cell membrane. Its subcellular location is the cytoplasm. The catalysed reaction is GTP + H2O = GDP + phosphate + H(+). Involved in targeting and insertion of nascent membrane proteins into the cytoplasmic membrane. Acts as a receptor for the complex formed by the signal recognition particle (SRP) and the ribosome-nascent chain (RNC). This is Signal recognition particle receptor FtsY from Streptococcus mutans serotype c (strain ATCC 700610 / UA159).